The chain runs to 220 residues: UPF0319 protein YccT (220 aa).

The signal sequence occupies residues 1–20 (MKTGALTTFLALCLPVTVFA).

The protein belongs to the UPF0319 family.

The sequence is that of UPF0319 protein YccT from Salmonella dublin (strain CT_02021853).